Reading from the N-terminus, the 979-residue chain is Chromosome partition protein Smc (979 aa).

Pro33–Asn40 is a binding site for ATP. Residues Ser169–Asn400 adopt a coiled-coil conformation. In terms of domain architecture, SMC hinge spans Asp419–Ala538. 2 coiled-coil regions span residues Ile572 to Ser716 and Ser750 to Ile818.

This sequence belongs to the SMC family. In terms of assembly, homodimer.

It is found in the cytoplasm. Functionally, required for chromosome condensation and partitioning. The sequence is that of Chromosome partition protein Smc from Mesomycoplasma hyorhinis (Mycoplasma hyorhinis).